The following is a 322-amino-acid chain: Ferredoxin--NADP reductase (322 aa).

FAD-binding residues include Asp34, Gln42, Tyr47, Val87, Phe120, Asp279, and Thr320.

The protein belongs to the ferredoxin--NADP reductase type 2 family. In terms of assembly, homodimer. Requires FAD as cofactor.

The enzyme catalyses 2 reduced [2Fe-2S]-[ferredoxin] + NADP(+) + H(+) = 2 oxidized [2Fe-2S]-[ferredoxin] + NADPH. This Streptococcus pneumoniae serotype 19F (strain G54) protein is Ferredoxin--NADP reductase.